The primary structure comprises 153 residues: Aspartate carbamoyltransferase regulatory chain (153 aa).

Zn(2+) contacts are provided by Cys109, Cys114, Cys138, and Cys141.

This sequence belongs to the PyrI family. In terms of assembly, contains catalytic and regulatory chains. Zn(2+) serves as cofactor.

Its function is as follows. Involved in allosteric regulation of aspartate carbamoyltransferase. This is Aspartate carbamoyltransferase regulatory chain from Wigglesworthia glossinidia brevipalpis.